A 500-amino-acid chain; its full sequence is V-type proton ATPase subunit B (500 aa).

It belongs to the ATPase alpha/beta chains family. V-ATPase is a heteromultimeric enzyme composed of a peripheral catalytic V1 complex (main components: subunits A, B, C, D, E, and F) attached to an integral membrane V0 proton pore complex (main component: the proteolipid protein).

Functionally, non-catalytic subunit of the peripheral V1 complex of vacuolar ATPase. V-ATPase is responsible for acidifying a variety of intracellular compartments in eukaryotic cells. The polypeptide is V-type proton ATPase subunit B (Cyanidium caldarium (Red alga)).